The following is a 462-amino-acid chain: Gamma-aminobutyric acid receptor subunit alpha-5 (462 aa).

Residues 1–31 (MDNGMFSGFIMIKNLLLFCISMNLSSHFGFS) form the signal peptide. The Extracellular segment spans residues 32–260 (QMPTSSVKDE…FHLKRKIGYF (229 aa)). Asn-45 is a glycosylation site (N-linked (GlcNAc...) asparagine). Arg-101 contacts 4-aminobutanoate. The N-linked (GlcNAc...) asparagine glycan is linked to Asn-145. 4-aminobutanoate is bound at residue Thr-164. Residues Cys-173 and Cys-187 are joined by a disulfide bond. Residues Asn-207 and Asn-236 are each glycosylated (N-linked (GlcNAc...) asparagine). A helical membrane pass occupies residues 261–281 (VIQTYLPCIMTVILSQVSFWL). The Cytoplasmic portion of the chain corresponds to 282-286 (NRESV). Residues 287 to 308 (PARTVFGVTTVLTMTTLSISAR) form a helical membrane-spanning segment. Topologically, residues 309-318 (NSLPKVAYAT) are extracellular. Residues 319-340 (AMDWFIAVCYAFVFSALIEFAT) traverse the membrane as a helical segment. Residues 341–427 (VNYFTKRGWA…TYNSISKIDK (87 aa)) are Cytoplasmic-facing. Residue Lys-355 forms a Glycyl lysine isopeptide (Lys-Gly) (interchain with G-Cter in ubiquitin) linkage. The tract at residues 377–412 (FTTGKMSHPPNIPKEQTPAGTSNTTSVSVKPSEEKT) is disordered. A helical membrane pass occupies residues 428 to 448 (MSRIVFPVLFGTFNLVYWATY). The Extracellular portion of the chain corresponds to 449-462 (LNREPVIKGAASPK).

This sequence belongs to the ligand-gated ion channel (TC 1.A.9) family. Gamma-aminobutyric acid receptor (TC 1.A.9.5) subfamily. GABRA5 sub-subfamily. Heteropentamer, formed by a combination of alpha (GABRA1-6), beta (GABRB1-3), gamma (GABRG1-3), delta (GABRD), epsilon (GABRE), rho (GABRR1-3), pi (GABRP) and theta (GABRQ) chains, each subunit exhibiting distinct physiological and pharmacological properties.

Its subcellular location is the postsynaptic cell membrane. It localises to the cell membrane. It catalyses the reaction chloride(in) = chloride(out). Its function is as follows. Alpha subunit of the heteropentameric ligand-gated chloride channel gated by gamma-aminobutyric acid (GABA), a major inhibitory neurotransmitter in the brain. GABA-gated chloride channels, also named GABA(A) receptors (GABAAR), consist of five subunits arranged around a central pore and contain GABA active binding site(s) located at the alpha and beta subunit interface(s). When activated by GABA, GABAARs selectively allow the flow of chloride anions across the cell membrane down their electrochemical gradient. GABAARs containing alpha-5/GABRA5 subunits are mainly extrasynaptic and contribute to the tonic GABAergic inhibition in the hippocampus. Extrasynaptic alpha-5-containing GABAARs in CA1 pyramidal neurons play a role in learning and memory processes. The polypeptide is Gamma-aminobutyric acid receptor subunit alpha-5 (Homo sapiens (Human)).